A 231-amino-acid polypeptide reads, in one-letter code: GSK-3-binding protein FRAT2 (231 aa).

Disordered stretches follow at residues 1–24 (MPCR…DDSF) and 53–109 (DTAH…PGAV). Residues 7-23 (EEEEAGDEAEGEEDDDS) are compositionally biased toward acidic residues. The interval 172–194 (DPHRLLQQLVLSGNLIKEAVRRL) is involved in GSK-3 binding. The interval 203–231 (ATSPASAPGSGGGRSGPDSVTLQPSGAWL) is disordered.

It belongs to the GSK-3-binding protein family. Binds GSK-3 and prevents GSK-3-dependent phosphorylation.

Its function is as follows. Positively regulates the Wnt signaling pathway by stabilizing beta-catenin through the association with GSK-3. The protein is GSK-3-binding protein FRAT2 (Frat2) of Mus musculus (Mouse).